The primary structure comprises 225 residues: MRIDIITVLPEMIEGFFNCSIMKRAQDKGLAEIHIHNLRDYTEDKYRRVDDYPFGGFAGMVMKIEPIERCINTLKAERDYDEVIFTTPDGEQFDQKMANSLSLSGNLIILCGHFKGIDYRIREHLITKEISIGDYVLTGGELAAAVMADAIVRIIPGVISDEQSALSDSFQDNLLAAPVYTRPAEYKGWKVPEILLSGHEAKIKEWELQQSLERTRRLRPDLLED.

S-adenosyl-L-methionine-binding positions include Gly112 and 132–137; that span reads IGDYVL.

This sequence belongs to the RNA methyltransferase TrmD family. Homodimer.

The protein resides in the cytoplasm. It carries out the reaction guanosine(37) in tRNA + S-adenosyl-L-methionine = N(1)-methylguanosine(37) in tRNA + S-adenosyl-L-homocysteine + H(+). Its function is as follows. Specifically methylates guanosine-37 in various tRNAs. The protein is tRNA (guanine-N(1)-)-methyltransferase of Bacteroides fragilis (strain ATCC 25285 / DSM 2151 / CCUG 4856 / JCM 11019 / LMG 10263 / NCTC 9343 / Onslow / VPI 2553 / EN-2).